Here is a 226-residue protein sequence, read N- to C-terminus: ATP synthase F(0) complex subunit a (226 aa).

The next 6 membrane-spanning stretches (helical) occupy residues 5–25, 68–88, 97–117, 136–156, 179–199, and 201–221; these read LFAPFMIPVMLGIPITTLIII, WSLMLISLFLFIASTNLLGML, QLSMNVGMAIPLWAGTVATGF, FLIPMLVIIETISLFIQPVAL, LVLMSTSLFTAIITFTILALL, and ILEFRVALIQAYVFTLLVSLY.

It belongs to the ATPase A chain family. Component of the ATP synthase complex composed at least of ATP5F1A/subunit alpha, ATP5F1B/subunit beta, ATP5MC1/subunit c (homooctomer), MT-ATP6/subunit a, MT-ATP8/subunit 8, ATP5ME/subunit e, ATP5MF/subunit f, ATP5MG/subunit g, ATP5MK/subunit k, ATP5MJ/subunit j, ATP5F1C/subunit gamma, ATP5F1D/subunit delta, ATP5F1E/subunit epsilon, ATP5PF/subunit F6, ATP5PB/subunit b, ATP5PD/subunit d, ATP5PO/subunit OSCP. ATP synthase complex consists of a soluble F(1) head domain (subunits alpha(3) and beta(3)) - the catalytic core - and a membrane F(0) domain - the membrane proton channel (subunits c, a, 8, e, f, g, k and j). These two domains are linked by a central stalk (subunits gamma, delta, and epsilon) rotating inside the F1 region and a stationary peripheral stalk (subunits F6, b, d, and OSCP). Interacts with DNAJC30; interaction is direct.

The protein resides in the mitochondrion inner membrane. The catalysed reaction is H(+)(in) = H(+)(out). Functionally, subunit a, of the mitochondrial membrane ATP synthase complex (F(1)F(0) ATP synthase or Complex V) that produces ATP from ADP in the presence of a proton gradient across the membrane which is generated by electron transport complexes of the respiratory chain. ATP synthase complex consist of a soluble F(1) head domain - the catalytic core - and a membrane F(1) domain - the membrane proton channel. These two domains are linked by a central stalk rotating inside the F(1) region and a stationary peripheral stalk. During catalysis, ATP synthesis in the catalytic domain of F(1) is coupled via a rotary mechanism of the central stalk subunits to proton translocation. With the subunit c (ATP5MC1), forms the proton-conducting channel in the F(0) domain, that contains two crucial half-channels (inlet and outlet) that facilitate proton movement from the mitochondrial intermembrane space (IMS) into the matrix. Protons are taken up via the inlet half-channel and released through the outlet half-channel, following a Grotthuss mechanism. The polypeptide is ATP synthase F(0) complex subunit a (Balaenoptera musculus (Blue whale)).